A 219-amino-acid polypeptide reads, in one-letter code: MLSSFFLTQHLEAGTDEAGRGCLAGPVTAAAVILPENFESKILNDSKQLSEKTREQLKPIIEALAISFSVTHLDPLIIDEINILNASLKAMQECVLQLNPTPLYIIADGNRPLLSKNSFKKCSGKIFTNREIEILQSIPSSSIIKGDSKYLSIAAASVLAKTYRDEYMNTIHEEFPMYNWKKNKGYPTKEHREAIRKYGVTKYHRMTFRLLPEQTVLDL.

One can recognise an RNase H type-2 domain in the interval 10–219 (HLEAGTDEAG…LLPEQTVLDL (210 aa)). Asp-16, Glu-17, and Asp-108 together coordinate a divalent metal cation.

The protein belongs to the RNase HII family. The cofactor is Mn(2+). It depends on Mg(2+) as a cofactor.

The protein resides in the cytoplasm. It carries out the reaction Endonucleolytic cleavage to 5'-phosphomonoester.. Endonuclease that specifically degrades the RNA of RNA-DNA hybrids. This chain is Ribonuclease HII, found in Flavobacterium psychrophilum (strain ATCC 49511 / DSM 21280 / CIP 103535 / JIP02/86).